Here is a 349-residue protein sequence, read N- to C-terminus: MGEEKYLPELMAEKDSLDPSFVHASRLLAEEIEKFQGSDGRKEDEEKKYLDVISNKNIKLSERVLIPVKQYPKFNFVGKLLGPRGNSLKRLQEETGAKMSILGKGSMRDKAKEEELRKSGEAKYAHLSDELHVLIEVFAPPGEAYSRMSHALEEIKKFLVPDYNDEIRQEQLRELSYLNGSEESGRGRGIRGRGIRITPTAPSRGRGGAVPPPPPPGRGVLTPRGTTVTRGALPVPPVARGVPTPRARGTAAVPGYRAPPPPAPEAYEEYGYDDGYGGEYDDQTYEAYDNSYVTPTQSVPEYYDYGHGVNEDAYDSYAPEEWTTTRSSLKAPPPRSARGGYREHPYGRY.

The KH domain occupies 65–135 (LIPVKQYPKF…HLSDELHVLI (71 aa)). Disordered stretches follow at residues 181-263 (SEES…PPPA) and 320-349 (EEWTTTRSSLKAPPPRSARGGYREHPYGRY). Residues 218 to 231 (RGVLTPRGTTVTRG) are compositionally biased toward low complexity. An omega-N-methylarginine mark is found at Arg230 and Arg240. Residues 340 to 349 (GYREHPYGRY) are compositionally biased toward basic and acidic residues.

Belongs to the KHDRBS family. In terms of assembly, self-associates to form homooligomers. Interacts with SAFB, SFRS9 and YTHDC1. Found in a complex with KHDRBS1, KHDRBS2 and KHDRBS3. Interacts with RBMX. Interacts with the SH3 domains of FYN and PLCG1. Interacts with the SH2 domains of FYN, GRAP2, PLCG1 and RASA1. Interacts with RBMX. Post-translationally, methylated. In terms of processing, phosphorylated on tyrosine residues by FYN. Tyrosine phosphorylated by PTK6 and SRC. Tyrosine phosphorylated by SRC during mitosis. Expressed in the cortex, cerebellum, striatum, midbrain, brainstem and thalamus of the brain (at protein level). Expressed in neurons (at protein level). Expressed in brain and testis. Expressed in the dentate gyrus of the hippocampus.

The protein localises to the nucleus. Its function is as follows. RNA-binding protein that plays a role in the regulation of alternative splicing and influences mRNA splice site selection and exon inclusion. Its phosphorylation by FYN inhibits its ability to regulate splice site selection. Induces an increased concentration-dependent incorporation of exon in CD44 pre-mRNA by direct binding to purine-rich exonic enhancer. May function as an adapter protein for Src kinases during mitosis. Binds both poly(A) and poly(U) homopolymers. Phosphorylation by PTK6 inhibits its RNA-binding ability. This Rattus norvegicus (Rat) protein is KH domain-containing, RNA-binding, signal transduction-associated protein 2 (Khdrbs2).